We begin with the raw amino-acid sequence, 117 residues long: Prefoldin subunit beta (117 aa).

It belongs to the prefoldin subunit beta family. In terms of assembly, heterohexamer of two alpha and four beta subunits.

The protein localises to the cytoplasm. In terms of biological role, molecular chaperone capable of stabilizing a range of proteins. Seems to fulfill an ATP-independent, HSP70-like function in archaeal de novo protein folding. In Pyrococcus abyssi (strain GE5 / Orsay), this protein is Prefoldin subunit beta (pfdB).